We begin with the raw amino-acid sequence, 107 residues long: Biphenyl 2,3-dioxygenase, ferredoxin component (107 aa).

The Rieske domain maps to 4–99 (TKICSSGDLA…VKLEGDDVLV (96 aa)). 4 residues coordinate [2Fe-2S] cluster: C43, H45, C62, and H65.

Belongs to the bacterial ring-hydroxylating dioxygenase ferredoxin component family. In terms of assembly, the multicomponent biphenyl dioxygenase system is composed of a ferredoxin reductase (BphA4), a ferredoxin (BphA3), and a terminal oxygenase (BphA1A2). Requires [2Fe-2S] cluster as cofactor.

It participates in xenobiotic degradation; biphenyl degradation. Functionally, ferredoxin component of the biphenyl dioxygenase system that catalyzes the stereospecific dihydroxylation of the aromatic ring of biphenyl, yielding a dihydrodiol compound. Is likely involved in biphenyl degradation that allows growth of Rhodococcus sp. strain RHA1 on biphenyl as the sole source of carbon and energy. The dioxygenase system can also use naphtalene and 4-chlorobiphenyl (4-CB) as substrates, as well as some polychlorinated biphenyls (PCB) such as 2,2'-dichlorobiphenyl, 2,3-dichlorobiphenyl and 2,5,2'-trichlorobiphenyl. It exhibits weak activity toward dibenzofuran and dibenzo-p-dioxin. Electrons are transferred from NADH to the [2Fe-2S] cluster in BphA1 via FAD of BphA4 and [2Fe-2S] cluster of BphA3. The sequence is that of Biphenyl 2,3-dioxygenase, ferredoxin component from Rhodococcus jostii (strain RHA1).